The following is a 480-amino-acid chain: Flotillin-like protein 2 (480 aa).

A lipid anchor (S-palmitoyl cysteine) is attached at cysteine 37. The stretch at glutamate 237–alanine 257 forms a coiled coil.

Belongs to the band 7/mec-2 family. Flotillin subfamily. In terms of processing, may be palmitoylated. As to expression, expressed in flowers in green pods. Primarily expressed in vascular tissues. Upon induction of nodulation, expansion of expression in the root cortex in the region of elongating root hairs, which will eventually become colonized by bacteria. Expressed in the infection zone in nodules.

It is found in the cell membrane. The protein localises to the membrane. The protein resides in the caveola. Functionally, may act as a scaffolding protein within caveolar membranes, functionally participating in formation of caveolae or caveolae-like vesicles. Required for early symbiotic events and nodules formation. The sequence is that of Flotillin-like protein 2 (FLOT2) from Medicago truncatula (Barrel medic).